A 537-amino-acid chain; its full sequence is Pentatricopeptide repeat-containing protein At1g02370, mitochondrial (537 aa).

Residues 1–18 constitute a mitochondrion transit peptide; it reads MNFRNLIASGSRLGKRFC. PPR repeat units lie at residues 171-205, 206-240, 241-275, 277-307, 312-346, 347-377, and 382-416; these read HQST…NFVN, NSLP…GISP, CGVT…SEAK, TWNT…MEEK, NRDS…RPEV, NNLS…WESK, and DMRL…SKGP.

The protein belongs to the PPR family. P subfamily.

The protein localises to the mitochondrion. In Arabidopsis thaliana (Mouse-ear cress), this protein is Pentatricopeptide repeat-containing protein At1g02370, mitochondrial.